We begin with the raw amino-acid sequence, 274 residues long: Glutamate--cysteine ligase regulatory subunit (274 aa).

At K263 the chain carries N6-acetyllysine.

It belongs to the aldo/keto reductase family. Glutamate--cysteine ligase light chain subfamily. Heterodimer of a catalytic heavy chain and a regulatory light chain. As to expression, in all tissues examined. Highest levels in skeletal muscle.

The protein operates within sulfur metabolism; glutathione biosynthesis; glutathione from L-cysteine and L-glutamate: step 1/2. This is Glutamate--cysteine ligase regulatory subunit (GCLM) from Homo sapiens (Human).